The chain runs to 432 residues: Glutamate-1-semialdehyde 2,1-aminomutase (432 aa).

The residue at position 269 (Lys269) is an N6-(pyridoxal phosphate)lysine.

Belongs to the class-III pyridoxal-phosphate-dependent aminotransferase family. HemL subfamily. As to quaternary structure, homodimer. Pyridoxal 5'-phosphate is required as a cofactor.

It is found in the cytoplasm. It carries out the reaction (S)-4-amino-5-oxopentanoate = 5-aminolevulinate. It functions in the pathway porphyrin-containing compound metabolism; protoporphyrin-IX biosynthesis; 5-aminolevulinate from L-glutamyl-tRNA(Glu): step 2/2. Its pathway is porphyrin-containing compound metabolism; chlorophyll biosynthesis. This is Glutamate-1-semialdehyde 2,1-aminomutase from Chloroherpeton thalassium (strain ATCC 35110 / GB-78).